We begin with the raw amino-acid sequence, 283 residues long: Phosphatidylglycerol--prolipoprotein diacylglyceryl transferase (283 aa).

Helical transmembrane passes span 18-38, 59-79, 91-111, 124-144, 185-205, 213-233, and 251-271; these read LFGH…IILG, LAVY…VLFY, IFVT…IIIA, ILWV…MIRL, TQIY…WLYW, YSGL…FIIE, and GLNM…WLII. An a 1,2-diacyl-sn-glycero-3-phospho-(1'-sn-glycerol)-binding site is contributed by Arg143.

This sequence belongs to the Lgt family.

The protein resides in the cell inner membrane. The catalysed reaction is L-cysteinyl-[prolipoprotein] + a 1,2-diacyl-sn-glycero-3-phospho-(1'-sn-glycerol) = an S-1,2-diacyl-sn-glyceryl-L-cysteinyl-[prolipoprotein] + sn-glycerol 1-phosphate + H(+). Its pathway is protein modification; lipoprotein biosynthesis (diacylglyceryl transfer). Catalyzes the transfer of the diacylglyceryl group from phosphatidylglycerol to the sulfhydryl group of the N-terminal cysteine of a prolipoprotein, the first step in the formation of mature lipoproteins. This is Phosphatidylglycerol--prolipoprotein diacylglyceryl transferase from Porphyromonas gingivalis (strain ATCC 33277 / DSM 20709 / CIP 103683 / JCM 12257 / NCTC 11834 / 2561).